A 356-amino-acid polypeptide reads, in one-letter code: DNA polymerase IV (356 aa).

The UmuC domain maps to 6–187; sequence IIHIDMDAFY…QPIRRLHGVG (182 aa). Residues Asp-10 and Asp-105 each contribute to the Mg(2+) site. Glu-106 is an active-site residue.

It belongs to the DNA polymerase type-Y family. As to quaternary structure, monomer. It depends on Mg(2+) as a cofactor.

The protein resides in the cytoplasm. The catalysed reaction is DNA(n) + a 2'-deoxyribonucleoside 5'-triphosphate = DNA(n+1) + diphosphate. Functionally, poorly processive, error-prone DNA polymerase involved in untargeted mutagenesis. Copies undamaged DNA at stalled replication forks, which arise in vivo from mismatched or misaligned primer ends. These misaligned primers can be extended by PolIV. Exhibits no 3'-5' exonuclease (proofreading) activity. May be involved in translesional synthesis, in conjunction with the beta clamp from PolIII. This is DNA polymerase IV from Halorhodospira halophila (strain DSM 244 / SL1) (Ectothiorhodospira halophila (strain DSM 244 / SL1)).